The chain runs to 924 residues: Ubiquitin carboxyl-terminal hydrolase 15 (924 aa).

Zn(2+) is bound by residues Cys130, Cys133, Cys141, Cys144, Cys150, Cys154, His163, and Cys167. An MYND-type zinc finger spans residues 130-167; the sequence is CARCFGPAKTRCSRCKSVRYCSGKCQIIHWRVAHKDEC. Over residues 226–236 the composition is skewed to polar residues; that stretch reads DITPQINTQGR. Disordered stretches follow at residues 226–301 and 317–366; these read DITP…VDSS and SHKH…TSKK. Over residues 247-256 the composition is skewed to basic and acidic residues; sequence ANRESCRRDS. Residues 331 to 362 are compositionally biased toward polar residues; sequence GCPNTQYPSNGTRTATLPRTGINKSGEQSCTE. The region spanning 438 to 744 is the USP domain; it reads RGLVNCGNSC…GAYMLFYMRS (307 aa). Cys447 serves as the catalytic Nucleophile. His703 acts as the Proton acceptor in catalysis. Residues 750-793 form a disordered region; that stretch reads RGEHNGKAPVHHSQPRNEMKEQRKPVNRFKPRADHKNTESSSSE. Over residues 764–773 the composition is skewed to basic and acidic residues; it reads PRNEMKEQRK.

Belongs to the peptidase C19 family. As to quaternary structure, interacts with DA1. In terms of tissue distribution, highly expressed in rosette leaves and inflorescence. Expressed at low levels in cotyledons, stems, cauline leaves and siliques.

The protein resides in the cytoplasm. Its subcellular location is the nucleus. The catalysed reaction is Thiol-dependent hydrolysis of ester, thioester, amide, peptide and isopeptide bonds formed by the C-terminal Gly of ubiquitin (a 76-residue protein attached to proteins as an intracellular targeting signal).. Functionally, recognizes and hydrolyzes the peptide bond at the C-terminal Gly of ubiquitin. Involved in the processing of poly-ubiquitin precursors as well as that of ubiquitinated proteins. Involved in the regulation of organ size. Acts as a positive regulator of cell proliferation. Possesses deubiquitinating enzyme activity in vitro. The enzyme activity of UBP15 is required for its function in regulation of cell proliferation. Functions antagonistically in a common pathway with DA1 to regulate seed size. Acts maternally to regulate seed size by promoting cell proliferation in the integuments of ovules and developing seeds. Functions independently of DA2 and BB. The protein is Ubiquitin carboxyl-terminal hydrolase 15 of Arabidopsis thaliana (Mouse-ear cress).